Reading from the N-terminus, the 479-residue chain is MILVTLFCICALVTSLQADARLSKRYVIGGCPSHCDKSMCPTMPKDCSTGQVMDHCNCCLVCASGEGEACGGVGKLGDPVCGESLECSVTGGVSYSATVRRRGKQGVCVCKSSDPVCGSDGVSYRDICELKRVSNRAQSLQQPPVLFIQRGACGTSLHDNPNSLRYKYNFIADVVEKIAPAVVHIELYRKMVYSKREMAVASGSGFVVSDDGLIVTNAHVVANKNRVKVELKNGASYDAKIKDVDEKADIALIKIDLPNKLPVLLLGRSADLRPGEFVVAIGSPFSLQNTVTTGIVSTTQRGGKELGLRNSDMDYIQTDAIINYGNSGGPLVNLDGEVIGINTLKVTAGISFAIPSDKIRQFLAESYDRLARGRGTTKKRYIGVRMMTLTPSLSKELKGRLRDFPDITSGAYVIEVISKTPAAAGGLKEHDVIISINGQRISTATDVSAIIKKESSLRVVVRRGNEDIILTIIPMEIDP.

Residues 1 to 18 form the signal peptide; the sequence is MILVTLFCICALVTSLQA. Residues 27-111 enclose the IGFBP N-terminal domain; that stretch reads VIGGCPSHCD…RGKQGVCVCK (85 aa). Disulfide bonds link Cys-31-Cys-56, Cys-35-Cys-58, Cys-40-Cys-59, Cys-47-Cys-62, Cys-70-Cys-87, and Cys-81-Cys-108. The Kazal-like domain maps to 96–155; sequence SATVRRRGKQGVCVCKSSDPVCGSDGVSYRDICELKRVSNRAQSLQQPPVLFIQRGACGT. The tract at residues 203–363 is serine protease; it reads GSGFVVSDDG…IPSDKIRQFL (161 aa). Catalysis depends on charge relay system residues His-219, Asp-249, and Ser-327. The PDZ domain maps to 364-466; sequence AESYDRLARG…LRVVVRRGNE (103 aa).

Belongs to the peptidase S1C family. As to quaternary structure, forms homotrimers. In the presence of substrate, may form higher-order multimers in a PDZ-independent manner.

The protein resides in the secreted. Its subcellular location is the cytoplasm. It localises to the cytosol. Serine protease with a variety of targets, including extracellular matrix proteins and proteoglycans. Through cleavage of proteoglycans, may release soluble FGF-glycosaminoglycan complexes that promote the range and intensity of FGF signals in the extracellular space. Regulates the availability of insulin-like growth factors (IGFs) by cleaving IGF-binding proteins. Inhibits signaling mediated by TGF-beta family members. Consequently, may regulate many physiological processes. Intracellularly, degrades TSC2, leading to the activation of TSC2 downstream targets. The chain is Serine protease HTRA1A (htra1a) from Danio rerio (Zebrafish).